We begin with the raw amino-acid sequence, 305 residues long: GTP cyclohydrolase FolE2 (305 aa).

It belongs to the GTP cyclohydrolase IV family.

It carries out the reaction GTP + H2O = 7,8-dihydroneopterin 3'-triphosphate + formate + H(+). It functions in the pathway cofactor biosynthesis; 7,8-dihydroneopterin triphosphate biosynthesis; 7,8-dihydroneopterin triphosphate from GTP: step 1/1. Its function is as follows. Converts GTP to 7,8-dihydroneopterin triphosphate. The sequence is that of GTP cyclohydrolase FolE2 from Xanthomonas axonopodis pv. citri (strain 306).